Consider the following 361-residue polypeptide: Large ribosomal subunit protein uL3 (361 aa).

A disordered region spans residues 339–361; it reads RPPKKKPPVQRPQITYVSVESKQ. Over residues 350–361 the composition is skewed to polar residues; it reads PQITYVSVESKQ.

The protein belongs to the universal ribosomal protein uL3 family. Part of the 50S ribosomal subunit. Forms a cluster with proteins L14 and L24e.

In terms of biological role, one of the primary rRNA binding proteins, it binds directly near the 3'-end of the 23S rRNA, where it nucleates assembly of the 50S subunit. This is Large ribosomal subunit protein uL3 from Pyrococcus abyssi (strain GE5 / Orsay).